A 281-amino-acid polypeptide reads, in one-letter code: Beta-etherase (281 aa).

The region spanning aspartate 11–proline 87 is the GST N-terminal domain. Positions glycine 244–aspartate 281 are disordered.

It belongs to the GST superfamily.

It localises to the cell inner membrane. Able to degrade various dimeric lignin compounds. Catalyzes the unique and reductive cleavage of arylglycerol-beta-aryl ether. The sequence is that of Beta-etherase (ligE) from Sphingobium sp. (strain NBRC 103272 / SYK-6).